The following is a 170-amino-acid chain: Adenine phosphoribosyltransferase (170 aa).

Belongs to the purine/pyrimidine phosphoribosyltransferase family. In terms of assembly, homodimer.

The protein resides in the cytoplasm. It catalyses the reaction AMP + diphosphate = 5-phospho-alpha-D-ribose 1-diphosphate + adenine. Its pathway is purine metabolism; AMP biosynthesis via salvage pathway; AMP from adenine: step 1/1. In terms of biological role, catalyzes a salvage reaction resulting in the formation of AMP, that is energically less costly than de novo synthesis. The chain is Adenine phosphoribosyltransferase from Geobacillus sp. (strain WCH70).